The chain runs to 161 residues: Putative 2'-deoxynucleoside 5'-phosphate N-hydrolase 1 (161 aa).

Substrate contacts are provided by residues 27-33, Tyr-42, His-60, Glu-106, and 128-130; these read FLSGSIR and SSM.

It belongs to the 2'-deoxynucleoside 5'-phosphate N-hydrolase 1 family. In terms of assembly, monomer and homodimer.

It catalyses the reaction a pyrimidine 2'-deoxyribonucleoside 5'-phosphate + H2O = a pyrimidine nucleobase + 2-deoxy-D-ribose 5-phosphate. The enzyme catalyses a purine 2'-deoxyribonucleoside 5'-phosphate + H2O = a purine nucleobase + 2-deoxy-D-ribose 5-phosphate. Catalyzes the cleavage of the N-glycosidic bond of deoxyribonucleoside 5'-monophosphates to yield deoxyribose 5-phosphate and a purine or pyrimidine base. This chain is Putative 2'-deoxynucleoside 5'-phosphate N-hydrolase 1, found in Methanosarcina mazei (strain ATCC BAA-159 / DSM 3647 / Goe1 / Go1 / JCM 11833 / OCM 88) (Methanosarcina frisia).